We begin with the raw amino-acid sequence, 89 residues long: MRILQLLFAIVVILLLQDAPARGFSDSQLCRNNHGHCRRLCFHMESWAGSCMNGRLRCCRFSTKQPFSNPKHSVLHTAEQDPSPSLGGT.

The signal sequence occupies residues 1–23 (MRILQLLFAIVVILLLQDAPARG). 3 disulfides stabilise this stretch: Cys30–Cys58, Cys37–Cys51, and Cys41–Cys59. The interval 66–89 (PFSNPKHSVLHTAEQDPSPSLGGT) is disordered.

This sequence belongs to the beta-defensin family. Expressed in the liver, gall bladder, kidney, small intestine, spleen, testis, ovary and male and female reproductive tracts. Not detected in the ovarian stroma and the theca and granulosa layers of the ovarian follicle.

The protein localises to the secreted. Its subcellular location is the cytoplasmic granule. In terms of biological role, has bactericidal activity. Potent activity against E.coli, L.monocytogenes, S.typhimurium and S.pyogenes but mot against S.aureus. Has bactericidal activity. The protein is Gallinacin-13 (GAL13) of Gallus gallus (Chicken).